The chain runs to 559 residues: Actin-binding protein WASF1 (559 aa).

Disordered stretches follow at residues 170–202, 304–383, and 412–490; these read EDKR…DRRR, IENR…GVLH, and VHPL…HPST. A compositionally biased stretch (basic and acidic residues) spans 182–202; sequence KNLDRPHEPEKVPRAPHDRRR. Residues 304–313 show a composition bias toward polar residues; sequence IENRPQSPAT. Residues 322-332 are compositionally biased toward pro residues; that stretch reads PTPPPPPPPLP. A compositionally biased stretch (low complexity) spans 333–346; it reads SALSTSSLRASMTS. Asymmetric dimethylarginine; alternate is present on Arg341. Arg341 bears the Omega-N-methylarginine; alternate mark. 3 stretches are compositionally biased toward pro residues: residues 347 to 360, 423 to 437, and 460 to 477; these read TPPP…PPPA, LPPP…PPGI, and STAP…PPSQ. The residue at position 489 (Ser489) is a Phosphoserine. Positions 497 to 514 constitute a WH2 domain; that stretch reads ARSVLLEAIRKGIQLRKV.

The protein belongs to the SCAR/WAVE family. In terms of assembly, component of the WAVE1 complex composed of ABI2, CYFIP1 or CYFIP2, BRK1, NCKAP1 and WASF1/WAVE1. Within the complex, a heterodimer containing NCKAP1 and CYFIP1 interacts with a heterotrimer formed by WAVE1, ABI2 and BRK1. CYFIP2 binds to activated RAC1 which causes the complex to dissociate, releasing activated WASF1. The complex can also be activated by NCK1. Binds actin and the Arp2/3 complex. Interacts with BAIAP2. Interacts with SHANK3; the interaction mediates the association of SHANK3 with the WAVE1 complex. Interacts with ABI1 (via N-terminus). Interacts with SORBS2; this interaction greatly enhances phosphorylation by ABL1 and dephosphorylation by PTPN12 and might mediate partial to focal adhesion sites.

It localises to the cytoplasm. It is found in the cytoskeleton. Its subcellular location is the synapse. The protein localises to the cell junction. The protein resides in the focal adhesion. In terms of biological role, downstream effector molecule involved in the transmission of signals from tyrosine kinase receptors and small GTPases to the actin cytoskeleton. Promotes formation of actin filaments. Part of the WAVE complex that regulates lamellipodia formation. The WAVE complex regulates actin filament reorganization via its interaction with the Arp2/3 complex. As component of the WAVE1 complex, required for BDNF-NTRK2 endocytic trafficking and signaling from early endosomes. Also involved in the regulation of mitochondrial dynamics. This chain is Actin-binding protein WASF1 (WASF1), found in Pongo abelii (Sumatran orangutan).